A 494-amino-acid polypeptide reads, in one-letter code: Cobyric acid synthase (494 aa).

The GATase cobBQ-type domain occupies 249–443 (EINVTILRLP…LHGIFDNGAW (195 aa)). Residue C330 is the Nucleophile of the active site. H435 is a catalytic residue.

Belongs to the CobB/CobQ family. CobQ subfamily.

The protein operates within cofactor biosynthesis; adenosylcobalamin biosynthesis. Its function is as follows. Catalyzes amidations at positions B, D, E, and G on adenosylcobyrinic A,C-diamide. NH(2) groups are provided by glutamine, and one molecule of ATP is hydrogenolyzed for each amidation. The polypeptide is Cobyric acid synthase (Crocosphaera subtropica (strain ATCC 51142 / BH68) (Cyanothece sp. (strain ATCC 51142))).